Consider the following 563-residue polypeptide: Putative ABC transporter ATP-binding protein SCO2324 (563 aa).

The ABC transporter 1 domain occupies 2–243 (IRFEDVSVTY…SPVYPPVVGL (242 aa)). An ATP-binding site is contributed by 36–43 (GPSGVGKS). Residues 271-317 (AGREIPDHTPPPSAPLPAPPAPRPVTSRWRRRGKRPENPSAPTPYAA) form a disordered region. Positions 278-293 (HTPPPSAPLPAPPAPR) are enriched in pro residues. The ABC transporter 2 domain maps to 317–545 (AEVRSLAVRR…SPSYAPQVAK (229 aa)). 349-356 (GRNGAGKS) serves as a coordination point for ATP.

The protein belongs to the ABC transporter superfamily.

It localises to the cell membrane. Probably part of an ABC transporter complex. Responsible for energy coupling to the transport system. This Streptomyces coelicolor (strain ATCC BAA-471 / A3(2) / M145) protein is Putative ABC transporter ATP-binding protein SCO2324.